We begin with the raw amino-acid sequence, 303 residues long: Nucleotide-binding protein Acry_0446 (303 aa).

10–17 (GLSGAGRN) lines the ATP pocket. 54-57 (DART) lines the GTP pocket.

This sequence belongs to the RapZ-like family.

Displays ATPase and GTPase activities. The polypeptide is Nucleotide-binding protein Acry_0446 (Acidiphilium cryptum (strain JF-5)).